A 220-amino-acid chain; its full sequence is Ras-related protein Rab-11B (220 aa).

18 to 25 (GDSGVGKS) is a GTP binding site. An Effector region motif is present at residues 40-48 (KLSTIGVEF). GTP is bound by residues 66 to 70 (DTAGQ) and 124 to 127 (NKSD). Residues Cys-219 and Cys-220 are each lipidated (S-geranylgeranyl cysteine).

This sequence belongs to the small GTPase superfamily. Rab family.

The protein resides in the cell membrane. This is Ras-related protein Rab-11B (rab11B) from Dictyostelium discoideum (Social amoeba).